The sequence spans 146 residues: Leghemoglobin-3 (146 aa).

In terms of domain architecture, Globin spans 2-146 (GFTDKQEALV…LATAIKKAMV (145 aa)). Y29 carries the post-translational modification Nitrated tyrosine. Heme b is bound at residue S44. The residue at position 44 (S44) is a Phosphoserine. H61 is an O2 binding site. K64, H93, and K96 together coordinate heme b. A Nitrated tyrosine modification is found at Y134.

Belongs to the plant globin family. As to quaternary structure, monomer. Nitrated in effective nodules and particularly in hypoxic conditions; this mechanism may play a protective role in the symbiosis by buffering toxic peroxynitrite NO(2)(-). Nitration level decrease during nodule senescence. Post-translationally, phosphorylation at Ser-44 disrupts the molecular environment of its porphyrin ring oxygen binding pocket, thus leading to a reduced oxygen consumption and to the delivery of oxygen O(2) to symbiosomes. As to expression, root nodules.

The protein resides in the cytoplasm. The protein localises to the cytosol. Its subcellular location is the nucleus. Functionally, leghemoglobin that reversibly binds oxygen O(2) through a pentacoordinated heme iron. In root nodules, facilitates the diffusion of oxygen to the bacteroids while preventing the bacterial nitrogenase from being inactivated by buffering dioxygen, nitric oxide and carbon monoxide, and promoting the formation of reactive oxygen species (ROS, e.g. H(2)O(2)). This role is essential for symbiotic nitrogen fixation (SNF). In Medicago sativa (Alfalfa), this protein is Leghemoglobin-3.